Here is a 254-residue protein sequence, read N- to C-terminus: uncharacterized protein (254 aa).

Val7 and Asn85 together coordinate NADP(+). Ser136 functions as the Proton donor in the catalytic mechanism. Residues Tyr150, Lys154, Val181, and Thr183 each contribute to the NADP(+) site. The active-site Proton acceptor is Tyr150. Lys154 (lowers pKa of active site Tyr) is an active-site residue.

The protein belongs to the short-chain dehydrogenases/reductases (SDR) family.

This is an uncharacterized protein from Saccharomyces cerevisiae (strain ATCC 204508 / S288c) (Baker's yeast).